A 619-amino-acid chain; its full sequence is DNA mismatch repair protein MutL (619 aa).

Positions 339–400 (AEKDDPPAPR…GGASWPHAQP (62 aa)) are disordered.

This sequence belongs to the DNA mismatch repair MutL/HexB family.

Functionally, this protein is involved in the repair of mismatches in DNA. It is required for dam-dependent methyl-directed DNA mismatch repair. May act as a 'molecular matchmaker', a protein that promotes the formation of a stable complex between two or more DNA-binding proteins in an ATP-dependent manner without itself being part of a final effector complex. The polypeptide is DNA mismatch repair protein MutL (Klebsiella pneumoniae subsp. pneumoniae (strain ATCC 700721 / MGH 78578)).